Consider the following 216-residue polypeptide: MRDQFISLALILCVLHSACGLYFHISETERKCFIEEVPDETTVIVNYKVELYDPRSNGFMPSSPGIGMHVEVRDSDDKIVLSRVYSSQGRISFTSHTPGEHVICMFSNSTAWFSGAQLRVHLDIQVGEHAIDYANVAQKEKLTELQLRIRQLLDQVEQITKEQNYQRYREERFRHTSESTNSRVLWWSLAQTIVLVCMGFWQMRHLKSFFEAKKLV.

The N-terminal stretch at 1–20 is a signal peptide; sequence MRDQFISLALILCVLHSACG. The Lumenal segment spans residues 21-182; it reads LYFHISETER…FRHTSESTNS (162 aa). Residues 30 to 126 form the GOLD domain; sequence RKCFIEEVPD…QLRVHLDIQV (97 aa). Residues 134–164 are a coiled coil; that stretch reads ANVAQKEKLTELQLRIRQLLDQVEQITKEQN. A helical transmembrane segment spans residues 183-203; that stretch reads RVLWWSLAQTIVLVCMGFWQM. The Cytoplasmic portion of the chain corresponds to 204–216; that stretch reads RHLKSFFEAKKLV. A Prevents secretion from ER motif is present at residues 213 to 216; the sequence is KKLV.

The protein belongs to the EMP24/GP25L family.

Its subcellular location is the endoplasmic reticulum membrane. In terms of biological role, eca and bai are essential, though not redundant, for dorsoventral patterning of the embryo. Specifically required during early embryogenesis for the activity of maternal tkv, while the zygotic tkv is not affected. Involved in Golgi organization. The protein is Transmembrane emp24 domain-containing protein eca of Drosophila sechellia (Fruit fly).